The sequence spans 229 residues: Large ribosomal subunit protein uL1 (229 aa).

In terms of assembly, part of the 50S ribosomal subunit.

In terms of biological role, directly binds to 23S rRNA. Forms what is known as the L1 stalk, which protrudes beyond the 70S ribosome surface. The stalk is preferentially stabilized in 70S versus 50S crystals. Interacts with the E site tRNA, blocking the exit path. This blockage implies that this section of the ribosome must be able to move to release the deacetylated tRNA. Its function is as follows. Protein L1 is also a translational repressor protein, it controls the translation of the L11 operon by binding to its mRNA. The sequence is that of Large ribosomal subunit protein uL1 (rplA) from Thermus thermophilus (strain ATCC 27634 / DSM 579 / HB8).